Reading from the N-terminus, the 224-residue chain is Phosphoribosylformylglycinamidine synthase subunit PurQ (224 aa).

Residues 4-224 (RIGVITFPGT…YSALDSVLAS (221 aa)) form the Glutamine amidotransferase type-1 domain. Cys87 serves as the catalytic Nucleophile. Residues His195 and Glu197 contribute to the active site.

Part of the FGAM synthase complex composed of 1 PurL, 1 PurQ and 2 PurS subunits.

It localises to the cytoplasm. It carries out the reaction N(2)-formyl-N(1)-(5-phospho-beta-D-ribosyl)glycinamide + L-glutamine + ATP + H2O = 2-formamido-N(1)-(5-O-phospho-beta-D-ribosyl)acetamidine + L-glutamate + ADP + phosphate + H(+). It catalyses the reaction L-glutamine + H2O = L-glutamate + NH4(+). The protein operates within purine metabolism; IMP biosynthesis via de novo pathway; 5-amino-1-(5-phospho-D-ribosyl)imidazole from N(2)-formyl-N(1)-(5-phospho-D-ribosyl)glycinamide: step 1/2. Part of the phosphoribosylformylglycinamidine synthase complex involved in the purines biosynthetic pathway. Catalyzes the ATP-dependent conversion of formylglycinamide ribonucleotide (FGAR) and glutamine to yield formylglycinamidine ribonucleotide (FGAM) and glutamate. The FGAM synthase complex is composed of three subunits. PurQ produces an ammonia molecule by converting glutamine to glutamate. PurL transfers the ammonia molecule to FGAR to form FGAM in an ATP-dependent manner. PurS interacts with PurQ and PurL and is thought to assist in the transfer of the ammonia molecule from PurQ to PurL. This Mycobacterium leprae (strain TN) protein is Phosphoribosylformylglycinamidine synthase subunit PurQ.